The following is a 421-amino-acid chain: UDP-N-acetylglucosamine 1-carboxyvinyltransferase (421 aa).

23-24 (KN) contributes to the phosphoenolpyruvate binding site. Arginine 92 lines the UDP-N-acetyl-alpha-D-glucosamine pocket. The active-site Proton donor is cysteine 116. At cysteine 116 the chain carries 2-(S-cysteinyl)pyruvic acid O-phosphothioketal. UDP-N-acetyl-alpha-D-glucosamine contacts are provided by residues 121–125 (RPVDL), 161–164 (KVSV), aspartate 306, and isoleucine 328.

This sequence belongs to the EPSP synthase family. MurA subfamily.

It is found in the cytoplasm. It catalyses the reaction phosphoenolpyruvate + UDP-N-acetyl-alpha-D-glucosamine = UDP-N-acetyl-3-O-(1-carboxyvinyl)-alpha-D-glucosamine + phosphate. It functions in the pathway cell wall biogenesis; peptidoglycan biosynthesis. In terms of biological role, cell wall formation. Adds enolpyruvyl to UDP-N-acetylglucosamine. This chain is UDP-N-acetylglucosamine 1-carboxyvinyltransferase, found in Vibrio vulnificus (strain CMCP6).